The primary structure comprises 396 residues: Elongation factor Tu (396 aa).

One can recognise a tr-type G domain in the interval 10–206; the sequence is KPHVNVGTIG…ALDTYIPTPE (197 aa). The segment at 19–26 is G1; sequence GHVDHGKT. 19-26 is a GTP binding site; it reads GHVDHGKT. Thr-26 serves as a coordination point for Mg(2+). The G2 stretch occupies residues 60-64; that stretch reads GITIN. Positions 81-84 are G3; it reads DCPG. GTP contacts are provided by residues 81–85 and 136–139; these read DCPGH and NKAD. Residues 136-139 form a G4 region; the sequence is NKAD. Residues 174 to 176 form a G5 region; sequence SAK.

It belongs to the TRAFAC class translation factor GTPase superfamily. Classic translation factor GTPase family. EF-Tu/EF-1A subfamily. In terms of assembly, monomer.

It is found in the cytoplasm. The enzyme catalyses GTP + H2O = GDP + phosphate + H(+). GTP hydrolase that promotes the GTP-dependent binding of aminoacyl-tRNA to the A-site of ribosomes during protein biosynthesis. This chain is Elongation factor Tu, found in Bordetella bronchiseptica (strain ATCC BAA-588 / NCTC 13252 / RB50) (Alcaligenes bronchisepticus).